A 440-amino-acid chain; its full sequence is Protein translocase subunit SecY (440 aa).

Helical transmembrane passes span 17-37 (IFFTIAMIVLYRIGAQIPSPG), 74-94 (IFAIGIMPYITASIIVQLLTV), 116-135 (YTRYLTVALALLQSSGIVAL), 155-175 (FFDLIVLVITMTAGAVLVMWM), 178-198 (LITEKGVGNGMSLLIFAGIAT), 213-233 (GVVFAVVLASVLILVIGVVFV), 270-290 (VIPVIFASSLIYMPVLITQIV), 316-336 (WQYIVLYFALTIFFSYFYVSV), 374-394 (LLFVGSLYLAVIAVLPNIMLD), and 403-423 (GATPFGGTAILILVSVALTTV).

The protein belongs to the SecY/SEC61-alpha family. As to quaternary structure, component of the Sec protein translocase complex. Heterotrimer consisting of SecY, SecE and SecG subunits. The heterotrimers can form oligomers, although 1 heterotrimer is thought to be able to translocate proteins. Interacts with the ribosome. Interacts with SecDF, and other proteins may be involved. Interacts with SecA.

The protein localises to the cell membrane. Its function is as follows. The central subunit of the protein translocation channel SecYEG. Consists of two halves formed by TMs 1-5 and 6-10. These two domains form a lateral gate at the front which open onto the bilayer between TMs 2 and 7, and are clamped together by SecE at the back. The channel is closed by both a pore ring composed of hydrophobic SecY resides and a short helix (helix 2A) on the extracellular side of the membrane which forms a plug. The plug probably moves laterally to allow the channel to open. The ring and the pore may move independently. The sequence is that of Protein translocase subunit SecY from Corynebacterium glutamicum (strain ATCC 13032 / DSM 20300 / JCM 1318 / BCRC 11384 / CCUG 27702 / LMG 3730 / NBRC 12168 / NCIMB 10025 / NRRL B-2784 / 534).